The primary structure comprises 98 residues: NADH-ubiquinone oxidoreductase chain 4L (98 aa).

Helical transmembrane passes span 2-22 (PSIS…MLIF), 29-49 (SLLC…LTIL), and 61-81 (ILLL…LVTV).

This sequence belongs to the complex I subunit 4L family. As to quaternary structure, core subunit of respiratory chain NADH dehydrogenase (Complex I) which is composed of 45 different subunits.

Its subcellular location is the mitochondrion inner membrane. It catalyses the reaction a ubiquinone + NADH + 5 H(+)(in) = a ubiquinol + NAD(+) + 4 H(+)(out). Its function is as follows. Core subunit of the mitochondrial membrane respiratory chain NADH dehydrogenase (Complex I) which catalyzes electron transfer from NADH through the respiratory chain, using ubiquinone as an electron acceptor. Part of the enzyme membrane arm which is embedded in the lipid bilayer and involved in proton translocation. The chain is NADH-ubiquinone oxidoreductase chain 4L (MT-ND4L) from Eulemur coronatus (Crowned lemur).